A 370-amino-acid chain; its full sequence is Anhydro-N-acetylmuramic acid kinase (370 aa).

ATP is bound at residue Gly-13–Asp-20.

This sequence belongs to the anhydro-N-acetylmuramic acid kinase family.

The enzyme catalyses 1,6-anhydro-N-acetyl-beta-muramate + ATP + H2O = N-acetyl-D-muramate 6-phosphate + ADP + H(+). It functions in the pathway amino-sugar metabolism; 1,6-anhydro-N-acetylmuramate degradation. The protein operates within cell wall biogenesis; peptidoglycan recycling. Catalyzes the specific phosphorylation of 1,6-anhydro-N-acetylmuramic acid (anhMurNAc) with the simultaneous cleavage of the 1,6-anhydro ring, generating MurNAc-6-P. Is required for the utilization of anhMurNAc either imported from the medium or derived from its own cell wall murein, and thus plays a role in cell wall recycling. This chain is Anhydro-N-acetylmuramic acid kinase, found in Shewanella frigidimarina (strain NCIMB 400).